The chain runs to 222 residues: NADH dehydrogenase [ubiquinone] iron-sulfur protein 8-B, mitochondrial (222 aa).

4Fe-4S ferredoxin-type domains follow at residues 114–143 (RRYPTGEERCIACKLCEAVCPAQAITIEAE) and 153–182 (TRYDIDMTKCIYCGFCQEACPVDAIVEGPN). [4Fe-4S] cluster-binding residues include Cys-123, Cys-126, Cys-129, Cys-133, Cys-162, Cys-165, Cys-168, and Cys-172.

This sequence belongs to the complex I 23 kDa subunit family. As to quaternary structure, complex I is composed of at least 49 different subunits. This is a component of the iron-sulfur (IP) fragment of the enzyme. [4Fe-4S] cluster serves as cofactor.

The protein localises to the mitochondrion. It carries out the reaction a ubiquinone + NADH + 5 H(+)(in) = a ubiquinol + NAD(+) + 4 H(+)(out). Functionally, core subunit of the mitochondrial membrane respiratory chain NADH dehydrogenase (Complex I) that is believed to belong to the minimal assembly required for catalysis. Complex I functions in the transfer of electrons from NADH to the respiratory chain. The immediate electron acceptor for the enzyme is believed to be ubiquinone. May donate electrons to ubiquinone. In Arabidopsis thaliana (Mouse-ear cress), this protein is NADH dehydrogenase [ubiquinone] iron-sulfur protein 8-B, mitochondrial.